We begin with the raw amino-acid sequence, 373 residues long: MNYQLITTDAGLQQVCDQAKKHAQIALDTEFVRTRTYYPQLGLIQLYDGEQLSLIDPLPIKQWQPFIELLSNTQVVKFLHAGSEDLEVFLNAFKTLPTPMVDTQILAAFTGRPMSCGFATLVAEYMEVELDKSEARTDWLARPLTEKQCVYAAADVFYLLPMAKRLVQETEEAGWTAAASNECLLLCQRRSETLAPELAYREITNAWQLRPRQLGCLQKLAEWRLRQARERDLAVNFVVREENLWQVARHMPTSLGELDSLGLSGPEIRYHGKTLVALVAEAAELEESALPEPLPNLIDQPGYKKVFKEIKAAIVIASEQSGLSSELLASRRQINQLLNWHWKLKVGDNLPELVSGWRGDLLAAPLQDILKGY.

A 3'-5' exonuclease domain is found at 3–171 (YQLITTDAGL…MAKRLVQETE (169 aa)). The region spanning 210–289 (RPRQLGCLQK…AEAAELEESA (80 aa)) is the HRDC domain.

It belongs to the RNase D family. The cofactor is a divalent metal cation.

The protein resides in the cytoplasm. The catalysed reaction is Exonucleolytic cleavage that removes extra residues from the 3'-terminus of tRNA to produce 5'-mononucleotides.. In terms of biological role, exonuclease involved in the 3' processing of various precursor tRNAs. Initiates hydrolysis at the 3'-terminus of an RNA molecule and releases 5'-mononucleotides. The polypeptide is Ribonuclease D (Serratia proteamaculans (strain 568)).